Reading from the N-terminus, the 91-residue chain is YcgL domain-containing protein ETA_15380 (91 aa).

One can recognise a YcgL domain in the interval Met1–Leu85.

The polypeptide is YcgL domain-containing protein ETA_15380 (Erwinia tasmaniensis (strain DSM 17950 / CFBP 7177 / CIP 109463 / NCPPB 4357 / Et1/99)).